The sequence spans 310 residues: Zinc finger protein 42 homolog (310 aa).

The segment covering 1–15 (MSQQLKKRAKTRHQK) has biased composition (basic residues). Residues 1–35 (MSQQLKKRAKTRHQKGLGGRAPSGAKPRQGKSSQD) form a disordered region. 4 C2H2-type zinc fingers span residues 188–212 (IACP…LLIH), 217–239 (HVCA…FLVH), 245–269 (FRCT…VRIH), and 275–299 (FVCP…ILTH). Glycyl lysine isopeptide (Lys-Gly) (interchain with G-Cter in ubiquitin) cross-links involve residues lysine 231 and lysine 233.

Belongs to the krueppel C2H2-type zinc-finger protein family. In terms of processing, polyubiquitinated by RNF12, leading to proteasomal degradation. As to expression, expressed in kidney, epidermal keratinocytes, prostate epithelial cells, bronchial and small airway lung epithelial cells (at protein level). Expressed in malignant kidney and several carcinoma cell lines (at protein level). Expressed in embryonic stem cells, kidney, epidermal keratinocytes, prostate epithelial cells, bronchial and small airway lung epithelial cells. Expressed in embryonal carcinomas, seminomas, malignant kidney and several carcinoma cell lines.

The protein localises to the nucleus. Its function is as follows. Involved in the reprogramming of X-chromosome inactivation during the acquisition of pluripotency. Required for efficient elongation of TSIX, a non-coding RNA antisense to XIST. Binds DXPas34 enhancer within the TSIX promoter. Involved in ES cell self-renewal. The protein is Zinc finger protein 42 homolog (ZFP42) of Homo sapiens (Human).